The primary structure comprises 365 residues: Aspartate-semialdehyde dehydrogenase (365 aa).

NADP(+) contacts are provided by Thr12, Gly13, Ser14, Val15, Ser37, Ser40, Leu85, and Asp86. The Acyl-thioester intermediate role is filled by Cys156. Position 188 (Gly188) interacts with NADP(+). His256 functions as the Proton acceptor in the catalytic mechanism. Asn343 serves as a coordination point for NADP(+).

It belongs to the aspartate-semialdehyde dehydrogenase family. Homotetramer; dimer of dimers.

The protein resides in the cytoplasm. It is found in the cytosol. Its subcellular location is the nucleus. It carries out the reaction L-aspartate 4-semialdehyde + phosphate + NADP(+) = 4-phospho-L-aspartate + NADPH + H(+). It functions in the pathway amino-acid biosynthesis; L-methionine biosynthesis via de novo pathway; L-homoserine from L-aspartate: step 2/3. It participates in amino-acid biosynthesis; L-threonine biosynthesis; L-threonine from L-aspartate: step 2/5. With respect to regulation, inhibited by the non-competitive inhibitors phthalaldehyde and naphthalene, the competitive inhibitor 1,4-benzoquinone and derivates such as 2-chloro-3-methoxy-1,4-naphthoquinone, 2,3-dichloro-1,4-naphthoquinone, 2-chloro-1,4-naphthoquinone, 2-bromo-1,4-naphthoquinone and 2,3-dichloro-5,8-dihydroxy-1,4-naphthoquinone, and 5-aminoisoquinoline. Inhibited by vinyl sulfones. Its function is as follows. Catalyzes the NADPH-dependent formation of L-aspartate 4-semialdehyde (L-ASA) by the reductive dephosphorylation of 4-phospho-L-aspartate. Mediates the second step in the biosynthesis of amino acids that derive from aspartate (the aspartate family of amino acids), including methioinine and threonine, the latter of which is a precursor to isoleucine. The protein is Aspartate-semialdehyde dehydrogenase of Candida albicans (strain SC5314 / ATCC MYA-2876) (Yeast).